The sequence spans 343 residues: Cytoplasmic tRNA 2-thiolation protein 1 (343 aa).

Belongs to the TtcA family. CTU1/NCS6/ATPBD3 subfamily.

The protein localises to the cytoplasm. It functions in the pathway tRNA modification; 5-methoxycarbonylmethyl-2-thiouridine-tRNA biosynthesis. Its function is as follows. Plays a central role in 2-thiolation of mcm(5)S(2)U at tRNA wobble positions of tRNA(Lys), tRNA(Glu) and tRNA(Gln). Directly binds tRNAs and probably acts by catalyzing adenylation of tRNAs, an intermediate required for 2-thiolation. It is unclear whether it acts as a sulfurtransferase that transfers sulfur from thiocarboxylated URM1 onto the uridine of tRNAs at wobble position. This Drosophila grimshawi (Hawaiian fruit fly) protein is Cytoplasmic tRNA 2-thiolation protein 1.